Reading from the N-terminus, the 360-residue chain is MKPFLRSQLERYAQRLEELDFLLSREDIMSDMAQYRTISREHAEVTQVAGRYTRYRQREADLAGAREMLDDPDMADMAREEIAAAEAELVQLEDELQRLLLPRDPDEARNAFLEIRAGTGGDESALFAGDLARMYTRYAATAGWKVEILSASDNEIGGYKEVVLRVEGDGVYGALRFESGGHRVQRVPATETQGRIHTSACTVAVMPEPDEQQAITLNPADLRIDTFRASGAGGQHINKTDSAVRVVHLPTGIVAECQDGRSQHSNKAKALQVLQARIQEKERSERAAKEAALRKGLVGSGDRSDRIRTYNFPQGRLTDHRINLTLYKLLAIMEGDLGEVLEALRHAREAELLAELESAA.

Glutamine 235 carries the N5-methylglutamine modification.

It belongs to the prokaryotic/mitochondrial release factor family. Post-translationally, methylated by PrmC. Methylation increases the termination efficiency of RF1.

The protein resides in the cytoplasm. Functionally, peptide chain release factor 1 directs the termination of translation in response to the peptide chain termination codons UAG and UAA. The chain is Peptide chain release factor 1 from Paracidovorax citrulli (strain AAC00-1) (Acidovorax citrulli).